The chain runs to 309 residues: Metaxin-3 (309 aa).

Residues 274-309 (MDDNLRRSPQNRPQKLSTLKPVGGAENSHSSDLLSH) are disordered. Polar residues-rich tracts occupy residues 280-290 (RSPQNRPQKLS) and 300-309 (NSHSSDLLSH).

The protein belongs to the metaxin family. In terms of assembly, part of a large protein complex spanning both mitochondrial membranes termed the mitochondrial intermembrane space bridging (MIB) complex.

Its subcellular location is the mitochondrion. It is found in the mitochondrion outer membrane. Its function is as follows. Could function in transport of proteins into the mitochondrion. The sequence is that of Metaxin-3 (mtx3) from Xenopus laevis (African clawed frog).